The primary structure comprises 179 residues: MSSRILTSHFSGLEEFLQQHAALLAKSTDGTVAVFANNAPAFYALTPARLAQLLELEARLARPGSDIALDPQFFEEPAAAPVAVPMGKFAMYAGWQPDADFQRLAALWGIALSQPVTPEELAAFVAYWQAEGKVFHHVQWQQKLARSVQISRASNGGQPKRDVNSVSEPDSHIPRGFRG.

The tract at residues 1 to 83 (MSSRILTSHF…FEEPAAAPVA (83 aa)) is required for trimerization and to bind PriB. The tract at residues 84 to 179 (VPMGKFAMYA…DSHIPRGFRG (96 aa)) is binds ssDNA. Positions 151-179 (SRASNGGQPKRDVNSVSEPDSHIPRGFRG) are disordered. The span at 159–173 (PKRDVNSVSEPDSHI) shows a compositional bias: basic and acidic residues.

Belongs to the DnaT family. Homotrimer. Interacts with PriB. Interacts with PriC. Component of the replication restart primosome. Primosome assembly occurs via a 'hand-off' mechanism. PriA binds to replication forks, subsequently PriB then DnaT bind; DnaT then displaces ssDNA to generate the helicase loading substrate.

In terms of biological role, involved in the restart of stalled replication forks, which reloads the replicative helicase on sites other than the origin of replication. Can function in multiple replication restart pathways. Displaces ssDNA from a PriB-ssDNA complex. Probably forms a spiral filament on ssDNA. Functionally, binds single-stranded (ss)DNA. The minimal binding site is about 26 +/- 2 nucleotides (nt) per trimer. Two DNA-protein complexes are seen with 55 nt-long ssDNA. The protein is Replication restart protein DnaT of Klebsiella pneumoniae subsp. pneumoniae (strain ATCC 700721 / MGH 78578).